The sequence spans 275 residues: 2,3,4,5-tetrahydropyridine-2,6-dicarboxylate N-succinyltransferase (275 aa).

Arg-106 and Asp-143 together coordinate substrate.

It belongs to the transferase hexapeptide repeat family. In terms of assembly, homotrimer.

Its subcellular location is the cytoplasm. It catalyses the reaction (S)-2,3,4,5-tetrahydrodipicolinate + succinyl-CoA + H2O = (S)-2-succinylamino-6-oxoheptanedioate + CoA. The protein operates within amino-acid biosynthesis; L-lysine biosynthesis via DAP pathway; LL-2,6-diaminopimelate from (S)-tetrahydrodipicolinate (succinylase route): step 1/3. This Rickettsia bellii (strain RML369-C) protein is 2,3,4,5-tetrahydropyridine-2,6-dicarboxylate N-succinyltransferase.